The chain runs to 194 residues: UPF0232 protein MSMEG_0004/MSMEI_0006 (194 aa).

Acidic residues predominate over residues 1–14 (MTGPFDDDGPEEDA). The tract at residues 1–81 (MTGPFDDDGP…GPGPDARDPQ (81 aa)) is disordered. Over residues 30–52 (DLVRRTLEEARGAARSQGKDVGR) the composition is skewed to basic and acidic residues.

The protein belongs to the UPF0232 family.

The sequence is that of UPF0232 protein MSMEG_0004/MSMEI_0006 from Mycolicibacterium smegmatis (strain ATCC 700084 / mc(2)155) (Mycobacterium smegmatis).